Reading from the N-terminus, the 444-residue chain is MQVTETQKEGLKRAYTITVTAAELDAKVQEKLVEAQPDIEMKGFRKGKVPLAMLKKQFGPRLLGDAMQDAIDGAMRDHLETSGDRPAMQPEVRMVDGETWKEGTDVVVEMKYEALPEIPEIETSKVSLERLVVKADEAAIEEALKNLAESAQNFEDRRKGSKAKDGDQVVIDFKGSVDGELFEGGSAEDYPLVLGSGSFIPGFEEQLVGTKVDDEVTVKVTFPAEYGAKHLAGKEAEFACTVKAVKAPKAAELDDELAKKYGAEDLAALKGQISERLEAEYKGASRAVLKRALLDQLDQMVSFELPSKLVEAEAHQIAHQLWHEEHPEEHGHNHGNIEPTDEHKALAERRVRLGLLLAEIGRKAEVTVTDAEMTQAVLAQARQYPGQERAYFEFVQKNPQIQQQLRAPIFEDKVVDLILEGATVTEKEVGKDDLQKAIEALDEM.

The 86-residue stretch at 166–251 (GDQVVIDFKG…VKAVKAPKAA (86 aa)) folds into the PPIase FKBP-type domain.

It belongs to the FKBP-type PPIase family. Tig subfamily.

Its subcellular location is the cytoplasm. It carries out the reaction [protein]-peptidylproline (omega=180) = [protein]-peptidylproline (omega=0). In terms of biological role, involved in protein export. Acts as a chaperone by maintaining the newly synthesized protein in an open conformation. Functions as a peptidyl-prolyl cis-trans isomerase. The protein is Trigger factor of Cereibacter sphaeroides (strain KD131 / KCTC 12085) (Rhodobacter sphaeroides).